Reading from the N-terminus, the 274-residue chain is Octanoyltransferase LipM (274 aa).

The BPL/LPL catalytic domain maps to G31 to L245. The active-site Acyl-thioester intermediate is the C147.

The protein belongs to the octanoyltransferase LipM family. In terms of assembly, monomer.

The enzyme catalyses octanoyl-[ACP] + L-lysyl-[protein] = N(6)-octanoyl-L-lysyl-[protein] + holo-[ACP] + H(+). The protein operates within protein modification; protein lipoylation via endogenous pathway; protein N(6)-(lipoyl)lysine from octanoyl-[acyl-carrier-protein]. Its function is as follows. Catalyzes the transfer of endogenously produced octanoic acid from octanoyl-acyl-carrier-protein onto the lipoyl domain of GcvH, an intermediate carrier during protein lipoylation. The polypeptide is Octanoyltransferase LipM (Kyrpidia tusciae (strain DSM 2912 / NBRC 15312 / T2) (Bacillus tusciae)).